Consider the following 483-residue polypeptide: tRNA sulfurtransferase (483 aa).

A THUMP domain is found at 62-166 (PQICDALTRV…QDKLTLIKAR (105 aa)). ATP-binding positions include 184 to 185 (LI), Lys266, Gly288, and Gln297. A disulfide bridge connects residues Cys345 and Cys457. The Rhodanese domain maps to 405 to 483 (LADTDVLLDI…GYTNVKVYRP (79 aa)). Cys457 serves as the catalytic Cysteine persulfide intermediate.

The protein belongs to the ThiI family.

It localises to the cytoplasm. It carries out the reaction [ThiI sulfur-carrier protein]-S-sulfanyl-L-cysteine + a uridine in tRNA + 2 reduced [2Fe-2S]-[ferredoxin] + ATP + H(+) = [ThiI sulfur-carrier protein]-L-cysteine + a 4-thiouridine in tRNA + 2 oxidized [2Fe-2S]-[ferredoxin] + AMP + diphosphate. It catalyses the reaction [ThiS sulfur-carrier protein]-C-terminal Gly-Gly-AMP + S-sulfanyl-L-cysteinyl-[cysteine desulfurase] + AH2 = [ThiS sulfur-carrier protein]-C-terminal-Gly-aminoethanethioate + L-cysteinyl-[cysteine desulfurase] + A + AMP + 2 H(+). Its pathway is cofactor biosynthesis; thiamine diphosphate biosynthesis. In terms of biological role, catalyzes the ATP-dependent transfer of a sulfur to tRNA to produce 4-thiouridine in position 8 of tRNAs, which functions as a near-UV photosensor. Also catalyzes the transfer of sulfur to the sulfur carrier protein ThiS, forming ThiS-thiocarboxylate. This is a step in the synthesis of thiazole, in the thiamine biosynthesis pathway. The sulfur is donated as persulfide by IscS. The sequence is that of tRNA sulfurtransferase from Yersinia enterocolitica serotype O:8 / biotype 1B (strain NCTC 13174 / 8081).